The following is a 77-amino-acid chain: Omega-conotoxin-like 6 (77 aa).

An N-terminal signal peptide occupies residues 1 to 22 (MKLTCVVIIAVLLLTACQLITA). Residues 23–50 (DDSRGVQKHRSLRSTTKVSKSTSCMEAG) constitute a propeptide that is removed on maturation. Cystine bridges form between cysteine 46–cysteine 61, cysteine 53–cysteine 64, and cysteine 60–cysteine 71.

Belongs to the conotoxin O1 superfamily. As to expression, expressed by the venom duct.

The protein resides in the secreted. Functionally, omega-conotoxins act at presynaptic membranes, they bind and block voltage-gated calcium channels (Cav). This chain is Omega-conotoxin-like 6, found in Conus striatus (Striated cone).